The sequence spans 383 residues: Outer membrane protein Omp-EA (383 aa).

The N-terminal stretch at 1–21 (MKRNILAVLIPALLAAGAANA) is a signal peptide. Topologically, residues 22-30 (AEIYNKDGN) are periplasmic. A beta stranded transmembrane segment spans residues 31-45 (KLDLYGKVKAMRYLS). At 46–58 (DADSNASNNADKS) the chain is on the extracellular side. A beta stranded membrane pass occupies residues 59–70 (YTRIGFKGQTLI). At 71–74 (NDQL) the chain is on the periplasmic side. The beta stranded transmembrane segment at 75–86 (TGYGQWEYNFSL) threads the bilayer. The Extracellular portion of the chain corresponds to 87–100 (SNSESSSDAQSGNK). Residues 101–109 (TRLGFAGLK) traverse the membrane as a beta stranded segment. Residues 110-112 (LKD) are Periplasmic-facing. Residues 113-122 (YGSVDYGRNY) traverse the membrane as a beta stranded segment. The Extracellular portion of the chain corresponds to 123-155 (GVIYDVEAFTDMMPEFGATGYTRTDTYMLTRGN). Residues 156–164 (SMLTWRNSD) traverse the membrane as a beta stranded segment. At 165 to 171 (FFGLVDG) the chain is on the periplasmic side. Residues 172 to 178 (LKIALQY) form a beta stranded membrane-spanning segment. Topologically, residues 179–198 (QGKNEGSGTRATNVSNGDGY) are extracellular. A beta stranded membrane pass occupies residues 199-206 (GASLSYKI). At 207 to 209 (VEG) the chain is on the periplasmic side. Residues 210–219 (LTINGAMSSS) form a beta stranded membrane-spanning segment. Residues 220–243 (NRLNANSASSTTSQKMAAYGSGGR) are Extracellular-facing. The beta stranded transmembrane segment at 244–252 (AEAWATGLK) threads the bilayer. Over 253–258 (YDANGV) the chain is Periplasmic. The chain crosses the membrane as a beta stranded span at residues 259–268 (YLAGTYAETR). Residues 269–296 (NTNPFSGASYTFAGNSTATAVSGYANKV) lie on the Extracellular side of the membrane. The beta stranded transmembrane segment at 297 to 307 (QNTELVAQYQF) threads the bilayer. The Periplasmic portion of the chain corresponds to 308 to 310 (DSG). A beta stranded transmembrane segment spans residues 311–319 (LRPSLAYVQ). The Extracellular segment spans residues 320 to 335 (TKAKDIENGIGDADLS). Residues 336-346 (KFVDVAATYYF) form a beta stranded membrane-spanning segment. Residues 347-351 (NKNMS) are Periplasmic-facing. A beta stranded membrane pass occupies residues 352–361 (AFVDYKVNLL). The Extracellular segment spans residues 362–372 (SDSNKLHLNTD). A beta stranded membrane pass occupies residues 373 to 383 (DIVAVGLVYQF).

This sequence belongs to the Gram-negative porin family. Homotrimer.

It localises to the cell outer membrane. Its function is as follows. May play an important role in maintaining pathogenicity in plants. In Erwinia amylovora (Fire blight bacteria), this protein is Outer membrane protein Omp-EA (omp-EA).